The sequence spans 144 residues: Sirohydrochlorin cobaltochelatase (144 aa).

The active-site Proton acceptor is histidine 9. Position 9 (histidine 9) interacts with Co(2+). Histidine 9 is a Ni(2+) binding site. Substrate is bound by residues glutamate 45 and leucine 70–histidine 75. A Co(2+)-binding site is contributed by histidine 75. A Ni(2+)-binding site is contributed by histidine 75. Residues glycine 89–alanine 112 form a disordered region. A compositionally biased stretch (basic residues) spans histidine 95–histidine 108.

It belongs to the CbiX family. CbiXS subfamily. As to quaternary structure, homotetramer; dimer of dimers.

The enzyme catalyses Co-sirohydrochlorin + 2 H(+) = sirohydrochlorin + Co(2+). The catalysed reaction is Ni-sirohydrochlorin + 2 H(+) = sirohydrochlorin + Ni(2+). It participates in cofactor biosynthesis; adenosylcobalamin biosynthesis; cob(II)yrinate a,c-diamide from sirohydrochlorin (anaerobic route): step 1/10. Functionally, catalyzes the insertion of Co(2+) into sirohydrochlorin as part of the anaerobic pathway to cobalamin biosynthesis. Involved in the biosynthesis of the unique nickel-containing tetrapyrrole coenzyme F430, the prosthetic group of methyl-coenzyme M reductase (MCR), which plays a key role in methanogenesis and anaerobic methane oxidation. Catalyzes the insertion of Ni(2+) into sirohydrochlorin to yield Ni-sirohydrochlorin. The protein is Sirohydrochlorin cobaltochelatase of Methanococcus maripaludis (strain DSM 14266 / JCM 13030 / NBRC 101832 / S2 / LL).